We begin with the raw amino-acid sequence, 200 residues long: MRDLTPRQEEILNLIREWIDTTGSPPTRAEIAQHFGFSSPNAAEQHLKTLAKKGALELVSGASRGIRLPGGGGLAVVGQVAAGSPILAQENIERHVQVDTALFSPRADYLLKVRGQSMKDIGILDGDLLAVHRSAEARAGQVVVARIGDEVTVKRFQKRGHTVQLLPENADFEPIVVDLKRQELVIEGIAVGVIRSGRSL.

The segment at residues 28–48 (RAEIAQHFGFSSPNAAEQHLK) is a DNA-binding region (H-T-H motif). Active-site for autocatalytic cleavage activity residues include S117 and K154.

Belongs to the peptidase S24 family. In terms of assembly, homodimer.

It catalyses the reaction Hydrolysis of Ala-|-Gly bond in repressor LexA.. Its function is as follows. Represses a number of genes involved in the response to DNA damage (SOS response), including recA and lexA. In the presence of single-stranded DNA, RecA interacts with LexA causing an autocatalytic cleavage which disrupts the DNA-binding part of LexA, leading to derepression of the SOS regulon and eventually DNA repair. The protein is LexA repressor of Thiobacillus denitrificans (strain ATCC 25259 / T1).